Consider the following 150-residue polypeptide: Ribonuclease pancreatic (150 aa).

The signal sequence occupies residues 1–26 (MALKSLVLLSLLVLVLLLVRVQPSLG). Lys-27 and Lys-33 each carry an N-linked (Glc) (glycation) lysine; in vitro glycan. Residues Lys-33 and Arg-36 each coordinate substrate. Catalysis depends on His-38, which acts as the Proton acceptor. Cystine bridges form between Cys-52-Cys-110, Cys-66-Cys-121, Cys-84-Cys-136, and Cys-91-Cys-98. Asn-60 carries an N-linked (GlcNAc...) asparagine; partial glycan. 2 N-linked (Glc) (glycation) lysine; in vitro glycosylation sites follow: Lys-63 and Lys-67. Residues 67-71 (KPVNT), Lys-92, and Arg-111 each bind substrate. His-145 functions as the Proton donor in the catalytic mechanism.

The protein belongs to the pancreatic ribonuclease family. As to quaternary structure, interacts with and forms tight 1:1 complexes with RNH1. Dimerization of two such complexes may occur. Interaction with RNH1 inhibits this protein. Monomer. In terms of tissue distribution, pancreas.

It localises to the secreted. The enzyme catalyses an [RNA] containing cytidine + H2O = an [RNA]-3'-cytidine-3'-phosphate + a 5'-hydroxy-ribonucleotide-3'-[RNA].. It carries out the reaction an [RNA] containing uridine + H2O = an [RNA]-3'-uridine-3'-phosphate + a 5'-hydroxy-ribonucleotide-3'-[RNA].. In terms of biological role, endonuclease that catalyzes the cleavage of RNA on the 3' side of pyrimidine nucleotides. Acts on single-stranded and double-stranded RNA. This is Ribonuclease pancreatic (RNASE1) from Bos taurus (Bovine).